The chain runs to 291 residues: UDP-N-acetylenolpyruvoylglucosamine reductase (291 aa).

Residues 19 to 186 enclose the FAD-binding PCMH-type domain; that stretch reads GIGGPAEWIA…VSARLKLASG (168 aa). Arginine 165 is a catalytic residue. Residue serine 215 is the Proton donor of the active site. Glutamate 285 is a catalytic residue.

The protein belongs to the MurB family. The cofactor is FAD.

It localises to the cytoplasm. The enzyme catalyses UDP-N-acetyl-alpha-D-muramate + NADP(+) = UDP-N-acetyl-3-O-(1-carboxyvinyl)-alpha-D-glucosamine + NADPH + H(+). It functions in the pathway cell wall biogenesis; peptidoglycan biosynthesis. In terms of biological role, cell wall formation. The sequence is that of UDP-N-acetylenolpyruvoylglucosamine reductase from Prochlorococcus marinus (strain NATL2A).